Here is a 395-residue protein sequence, read N- to C-terminus: Choline/ethanolamine kinase (395 aa).

The residue at position 2 (Ala2) is an N-acetylalanine. Residues 75-81 (SGGLSNL), Arg104, 146-152 (QYIPSRP), Gln244, and Asp264 contribute to the ATP site. 77 to 79 (GLS) serves as a coordination point for phosphocholine.

This sequence belongs to the choline/ethanolamine kinase family. Homodimer, and heterodimer with CHKA.

The enzyme catalyses choline + ATP = phosphocholine + ADP + H(+). It carries out the reaction ethanolamine + ATP = phosphoethanolamine + ADP + H(+). Its pathway is phospholipid metabolism; phosphatidylethanolamine biosynthesis; phosphatidylethanolamine from ethanolamine: step 1/3. In terms of biological role, has a key role in phospholipid metabolism, and catalyzes the first step of phosphatidylethanolamine and phosphatidylcholine biosynthesis. The protein is Choline/ethanolamine kinase (CHKB) of Homo sapiens (Human).